Consider the following 344-residue polypeptide: Glycerol-3-phosphate dehydrogenase [NAD(P)+] 2 (344 aa).

The NADPH site is built by serine 12, tryptophan 13, arginine 33, arginine 34, and lysine 107. Positions 107, 138, and 140 each coordinate sn-glycerol 3-phosphate. Alanine 142 contributes to the NADPH binding site. Sn-glycerol 3-phosphate is bound by residues lysine 193, aspartate 246, serine 256, arginine 257, and asparagine 258. The active-site Proton acceptor is lysine 193. Residue arginine 257 coordinates NADPH. NADPH contacts are provided by valine 281 and glutamate 283.

Belongs to the NAD-dependent glycerol-3-phosphate dehydrogenase family.

The protein resides in the cytoplasm. The enzyme catalyses sn-glycerol 3-phosphate + NAD(+) = dihydroxyacetone phosphate + NADH + H(+). It carries out the reaction sn-glycerol 3-phosphate + NADP(+) = dihydroxyacetone phosphate + NADPH + H(+). It functions in the pathway membrane lipid metabolism; glycerophospholipid metabolism. Functionally, catalyzes the reduction of the glycolytic intermediate dihydroxyacetone phosphate (DHAP) to sn-glycerol 3-phosphate (G3P), the key precursor for phospholipid synthesis. This Salinibacter ruber (strain DSM 13855 / M31) protein is Glycerol-3-phosphate dehydrogenase [NAD(P)+] 2.